Consider the following 191-residue polypeptide: Guanylate kinase (191 aa).

The 181-residue stretch at Gly8 to Val188 folds into the Guanylate kinase-like domain. Gly15–Ser22 serves as a coordination point for ATP.

The protein belongs to the guanylate kinase family.

The protein resides in the cytoplasm. It catalyses the reaction GMP + ATP = GDP + ADP. In terms of biological role, essential for recycling GMP and indirectly, cGMP. This is Guanylate kinase from Corynebacterium diphtheriae (strain ATCC 700971 / NCTC 13129 / Biotype gravis).